The following is a 34-amino-acid chain: Photosystem II reaction center protein Y (34 aa).

Topologically, residues 1-4 (MDIR) are lumenal. A helical membrane pass occupies residues 5-23 (LLIVLLPVLAAASWALYNI). Topologically, residues 24 to 34 (GRVALQQFRSM) are stromal.

The protein belongs to the PsbY family. As to quaternary structure, PSII is composed of 1 copy each of membrane proteins PsbA, PsbB, PsbC, PsbD, PsbE, PsbF, PsbH, PsbI, PsbJ, PsbK, PsbL, PsbM, PsbT, PsbX, PsbY, PsbZ, Psb30/Ycf12, at least 3 peripheral proteins of the oxygen-evolving complex and a large number of cofactors. It forms dimeric complexes.

The protein resides in the plastid. It localises to the chloroplast thylakoid membrane. In terms of biological role, loosely associated component of the core of photosystem II (PSII), it is not always seen in crystals. PSII is a light-driven water plastoquinone oxidoreductase, using light energy to abstract electrons from H(2)O, generating a proton gradient subsequently used for ATP formation. The protein is Photosystem II reaction center protein Y of Gracilaria tenuistipitata var. liui (Red alga).